Reading from the N-terminus, the 212-residue chain is 3-isopropylmalate dehydratase small subunit 1 (212 aa).

Belongs to the LeuD family. LeuD type 1 subfamily. Heterodimer of LeuC and LeuD.

It catalyses the reaction (2R,3S)-3-isopropylmalate = (2S)-2-isopropylmalate. The protein operates within amino-acid biosynthesis; L-leucine biosynthesis; L-leucine from 3-methyl-2-oxobutanoate: step 2/4. Catalyzes the isomerization between 2-isopropylmalate and 3-isopropylmalate, via the formation of 2-isopropylmaleate. This is 3-isopropylmalate dehydratase small subunit 1 from Chromobacterium violaceum (strain ATCC 12472 / DSM 30191 / JCM 1249 / CCUG 213 / NBRC 12614 / NCIMB 9131 / NCTC 9757 / MK).